The chain runs to 190 residues: Shikimate kinase (190 aa).

Residue 14 to 19 (GAGKST) participates in ATP binding. Ser18 lines the Mg(2+) pocket. Residues Asp36, Arg60, and Gly82 each coordinate substrate. Arg120 lines the ATP pocket. Arg139 provides a ligand contact to substrate.

Belongs to the shikimate kinase family. As to quaternary structure, monomer. Mg(2+) serves as cofactor.

It localises to the cytoplasm. It carries out the reaction shikimate + ATP = 3-phosphoshikimate + ADP + H(+). It participates in metabolic intermediate biosynthesis; chorismate biosynthesis; chorismate from D-erythrose 4-phosphate and phosphoenolpyruvate: step 5/7. Its function is as follows. Catalyzes the specific phosphorylation of the 3-hydroxyl group of shikimic acid using ATP as a cosubstrate. This is Shikimate kinase from Thioalkalivibrio sulfidiphilus (strain HL-EbGR7).